The primary structure comprises 277 residues: NAD kinase (277 aa).

Residue Asp-67 is the Proton acceptor of the active site. NAD(+) contacts are provided by residues 67 to 68 (DG), Arg-72, 137 to 138 (NE), Lys-148, Arg-165, Asp-167, 178 to 183 (TGYAMS), Leu-202, and Gln-236.

Belongs to the NAD kinase family. The cofactor is a divalent metal cation.

It is found in the cytoplasm. The catalysed reaction is NAD(+) + ATP = ADP + NADP(+) + H(+). Involved in the regulation of the intracellular balance of NAD and NADP, and is a key enzyme in the biosynthesis of NADP. Catalyzes specifically the phosphorylation on 2'-hydroxyl of the adenosine moiety of NAD to yield NADP. This chain is NAD kinase, found in Pyrococcus abyssi (strain GE5 / Orsay).